Reading from the N-terminus, the 161-residue chain is Endoribonuclease YbeY (161 aa).

The Zn(2+) site is built by histidine 121, histidine 125, and histidine 131.

This sequence belongs to the endoribonuclease YbeY family. It depends on Zn(2+) as a cofactor.

It localises to the cytoplasm. In terms of biological role, single strand-specific metallo-endoribonuclease involved in late-stage 70S ribosome quality control and in maturation of the 3' terminus of the 16S rRNA. The chain is Endoribonuclease YbeY from Xanthomonas oryzae pv. oryzae (strain MAFF 311018).